Reading from the N-terminus, the 380-residue chain is Cystathionine gamma-synthase (380 aa).

At Lys-195 the chain carries N6-(pyridoxal phosphate)lysine.

The protein belongs to the trans-sulfuration enzymes family. In terms of assembly, homotetramer. It depends on pyridoxal 5'-phosphate as a cofactor.

The protein localises to the cytoplasm. The enzyme catalyses O-succinyl-L-homoserine + L-cysteine = L,L-cystathionine + succinate + H(+). It participates in amino-acid biosynthesis; L-methionine biosynthesis via de novo pathway; L-cystathionine from O-succinyl-L-homoserine: step 1/1. With respect to regulation, four natural products, alpha-lapachone, 9-hydroxy-alpha-lapachone, Paulownin, and Yangambin, show strong inhibitory activities against CGS. All these four inhibitors prevent the binding of OSHS to CGS in a non-competitive fashion. These compounds are specific inhibitors against CGS from H.pylori relative to E.coli since they exhibit very low inhibition activities against CGS from E.coli. Catalyzes the formation of L-cystathionine from O-succinyl-L-homoserine (OSHS) and L-cysteine, via a gamma-replacement reaction. In the absence of thiol, catalyzes gamma-elimination to form 2-oxobutanoate, succinate and ammonia. This is Cystathionine gamma-synthase (metB) from Helicobacter pylori (Campylobacter pylori).